The sequence spans 360 residues: DNA replication and repair protein RecF (360 aa).

Position 33–40 (33–40 (GENGSGKT)) interacts with ATP.

The protein belongs to the RecF family.

The protein resides in the cytoplasm. Its function is as follows. The RecF protein is involved in DNA metabolism; it is required for DNA replication and normal SOS inducibility. RecF binds preferentially to single-stranded, linear DNA. It also seems to bind ATP. In Rickettsia massiliae (strain Mtu5), this protein is DNA replication and repair protein RecF.